The following is a 176-amino-acid chain: Ribosome rescue factor SmrB (176 aa).

Residues 97–172 (LDMHGMTQQE…GDGALLVLLS (76 aa)) enclose the Smr domain.

Belongs to the SmrB family. As to quaternary structure, associates with collided ribosomes, but not with correctly translating polysomes.

Its function is as follows. Acts as a ribosome collision sensor. Detects stalled/collided disomes (pairs of ribosomes where the leading ribosome is stalled and a second ribosome has collided with it) and endonucleolytically cleaves mRNA at the 5' boundary of the stalled ribosome. Stalled/collided disomes form a new interface (primarily via the 30S subunits) that binds SmrB. Cleaved mRNA becomes available for tmRNA ligation, leading to ribosomal subunit dissociation and rescue of stalled ribosomes. The polypeptide is Ribosome rescue factor SmrB (Vibrio vulnificus (strain CMCP6)).